The primary structure comprises 245 residues: MALRVQFENNDDIGVFTKLTNTYCLVAIGGSETFYSAFEAELGDTIPVVHANVGGCRIIGRLTVGNRNGLLVPNSTTDEELQHLRNSLPDAVKIYRVEERLSALGNVIACNDYVALVHPDLDKETEEIIADVLKVEVFRQTIADNSLVGSYAVLSNQGGMVHPKTSIQDQDELSSLLQVPLVAGTVNRGSEVLAAGMVVNDWLSFVGMNTTATEISVIESVFKLNQAQPATVTTKLRAALIEDMS.

The protein belongs to the eIF-6 family. Monomer. Associates with the 60S ribosomal subunit.

Its subcellular location is the cytoplasm. It localises to the nucleus. The protein localises to the nucleolus. In terms of biological role, binds to the 60S ribosomal subunit and prevents its association with the 40S ribosomal subunit to form the 80S initiation complex in the cytoplasm. May also be involved in ribosome biogenesis. This Drosophila melanogaster (Fruit fly) protein is Eukaryotic translation initiation factor 6.